A 166-amino-acid chain; its full sequence is Phospholipase A2 inhibitor clone 05 (166 aa).

Positions 1–19 (MRLILLSSLLLLGIFLADG) are cleaved as a signal peptide. A C-type lectin domain is found at 46–161 (LKGAFLTVHR…CDDNLLVVCE (116 aa)). 2 disulfide bridges follow: C83/C160 and C138/C152. Residue N122 is glycosylated (N-linked (GlcNAc...) asparagine).

This sequence belongs to the alpha-type phospholipase A2 inhibitor family. As to quaternary structure, homotrimer; non-covalently linked. Expressed by the liver.

It is found in the secreted. Its function is as follows. This phospholipase A2 inhibitor binds directly phospholipase A2 in the presence or absence of calcium. The protein is Phospholipase A2 inhibitor clone 05 of Bothrops moojeni (Lance-headed viper).